The primary structure comprises 381 residues: MTLRYLTAGESHGPALVAIAEGFPAGLAVDFEAVDRDLRRRQKGYGRGGRMKIETDAAQFLAGLRGGLTTGAPIALAVWNKDHENWKDLVSPYARGGRKFTQVRPGHADLAGALKYGLDDARDVLERASARSTAVTVALGALAKALLSTLGVEVCSRVVAIGPREIRPDAPPTPAQRDAIEASDLHVDDEALAAEWRALIDAEKARGGSIGGAFDVYATGLPIGVGSHVHPDRRLDARLAGALCGVQAIRAVEIGDGTQVGRPGYEFHDAIHHDPARGFWRETNRAGGLEGGMTDGMPLRVRAYMKPIPTMLHPLATVDLATRAATQARYERSDVCAVPAAAVVGEAVVAWELANALLEKFGGDAVEDVRRAVEAYAARIR.

Residues R41 and R47 each coordinate NADP(+). Residues 127 to 129, 247 to 248, G291, 306 to 310, and R332 contribute to the FMN site; these read RAS, QA, and KPIPT.

It belongs to the chorismate synthase family. As to quaternary structure, homotetramer. FMNH2 is required as a cofactor.

The catalysed reaction is 5-O-(1-carboxyvinyl)-3-phosphoshikimate = chorismate + phosphate. It participates in metabolic intermediate biosynthesis; chorismate biosynthesis; chorismate from D-erythrose 4-phosphate and phosphoenolpyruvate: step 7/7. In terms of biological role, catalyzes the anti-1,4-elimination of the C-3 phosphate and the C-6 proR hydrogen from 5-enolpyruvylshikimate-3-phosphate (EPSP) to yield chorismate, which is the branch point compound that serves as the starting substrate for the three terminal pathways of aromatic amino acid biosynthesis. This reaction introduces a second double bond into the aromatic ring system. This is Chorismate synthase from Anaeromyxobacter sp. (strain K).